Reading from the N-terminus, the 160-residue chain is Ribosomal RNA large subunit methyltransferase H (160 aa).

S-adenosyl-L-methionine contacts are provided by residues L77, G109, and 128 to 133 (FSRMTF).

The protein belongs to the RNA methyltransferase RlmH family. In terms of assembly, homodimer.

It localises to the cytoplasm. The catalysed reaction is pseudouridine(1915) in 23S rRNA + S-adenosyl-L-methionine = N(3)-methylpseudouridine(1915) in 23S rRNA + S-adenosyl-L-homocysteine + H(+). Functionally, specifically methylates the pseudouridine at position 1915 (m3Psi1915) in 23S rRNA. This is Ribosomal RNA large subunit methyltransferase H from Pelotomaculum thermopropionicum (strain DSM 13744 / JCM 10971 / SI).